Consider the following 876-residue polypeptide: Protein TORMOZ EMBRYO DEFECTIVE (876 aa).

WD repeat units lie at residues 58–97, 100–139, 142–183, 190–229, 255–294, 308–347, 356–396, 399–441, 444–484, 497–536, 539–580, 581–620, and 623–662; these read GESDTLTALALSPDDKLLFSAGHSRQIRVWDLETLKCIRS, GHEGPVMGMACHASGGLLATAGADRKVLVWDVDGGFCTHY, GHKG…TEKK, KHFSAVTSIALSEDGLTLFSAGRDKVVNLWDLHDYSCKAT, LDQKKSKKKESDSQATYFITVGERGVVRIWKSEGSICLYE, ESKRGFTAAAMLPSDHGLLCVTADQQFFFYSVVENVEETE, GYNE…CSYV, GHKE…CIGV, GHNG…EDSE, AHDKDINSVAVARNDSLVCTGSEDRTASIWRLPDLVHVVT, GHKR…KTFE, GHTSSVLRASFITDGTQFVSCGADGLLKLWNVNTSECIAT, and QHEDKVWALAVGKKTEMIATGGGDAVINLWHDSTASDKED. Residues 816–876 form a disordered region; sequence VETEYPKDEK…AEAQGSVIAV (61 aa). The segment covering 819-831 has biased composition (basic and acidic residues); it reads EYPKDEKKKEKDV. The Nuclear localization signal motif lies at 848–855; the sequence is SRKRKSQK. Basic residues predominate over residues 849–864; it reads RKRKSQKSKGKSNKKR.

Preferentially expressed in dividing cells in a variety of tissues and meristematic regions.

Its subcellular location is the nucleus. The protein localises to the nucleolus. In terms of biological role, essential protein involved in the regulation of cell division planes during embryogenesis which defines cell patterning, especially longitudinal division planes of the proembryo, probably via the regulation of embryo patterning genes expression patterns. This chain is Protein TORMOZ EMBRYO DEFECTIVE, found in Arabidopsis thaliana (Mouse-ear cress).